The sequence spans 308 residues: UDP-N-acetylenolpyruvoylglucosamine reductase (308 aa).

In terms of domain architecture, FAD-binding PCMH-type spans 22–185 (RVGGPADWLF…VEAAFRADAG (164 aa)). Arg-165 is an active-site residue. Basic and acidic residues predominate over residues 197-211 (QIARRDSSQPTRDRS). Residues 197-228 (QIARRDSSQPTRDRSAGSTFRNPAGFSSTGRA) are disordered. Residues 212–226 (AGSTFRNPAGFSSTG) are compositionally biased toward polar residues. The active-site Proton donor is the Ser-214. The active site involves Glu-296.

The protein belongs to the MurB family. It depends on FAD as a cofactor.

Its subcellular location is the cytoplasm. The catalysed reaction is UDP-N-acetyl-alpha-D-muramate + NADP(+) = UDP-N-acetyl-3-O-(1-carboxyvinyl)-alpha-D-glucosamine + NADPH + H(+). Its pathway is cell wall biogenesis; peptidoglycan biosynthesis. Cell wall formation. In Cereibacter sphaeroides (strain ATCC 17025 / ATH 2.4.3) (Rhodobacter sphaeroides), this protein is UDP-N-acetylenolpyruvoylglucosamine reductase.